Here is a 535-residue protein sequence, read N- to C-terminus: CTP synthase (535 aa).

Residues 1–267 form an amidoligase domain region; sequence MTKYIFVTGG…DKLVCEHMKL (267 aa). A CTP-binding site is contributed by Ser13. Residue Ser13 coordinates UTP. Residue 14–19 participates in ATP binding; it reads SLGKGI. Residue Tyr54 participates in L-glutamine binding. ATP is bound at residue Asp71. Mg(2+) contacts are provided by Asp71 and Glu141. CTP is bound by residues 148 to 150, 188 to 193, and Lys224; these read DIE and KTKPTQ. UTP-binding positions include 188 to 193 and Lys224; that span reads KTKPTQ. The 243-residue stretch at 292–534 folds into the Glutamine amidotransferase type-1 domain; it reads TIGLVGKYVE…IGASVEAANQ (243 aa). An L-glutamine-binding site is contributed by Gly354. Residue Cys381 is the Nucleophile; for glutamine hydrolysis of the active site. L-glutamine contacts are provided by residues 382 to 385, Glu405, and Arg462; that span reads LGMQ. Catalysis depends on residues His507 and Glu509.

Belongs to the CTP synthase family. As to quaternary structure, homotetramer. Interacts with BrxC.

The enzyme catalyses UTP + L-glutamine + ATP + H2O = CTP + L-glutamate + ADP + phosphate + 2 H(+). It catalyses the reaction L-glutamine + H2O = L-glutamate + NH4(+). It carries out the reaction UTP + NH4(+) + ATP = CTP + ADP + phosphate + 2 H(+). It participates in pyrimidine metabolism; CTP biosynthesis via de novo pathway; CTP from UDP: step 2/2. Allosterically activated by GTP, when glutamine is the substrate; GTP has no effect on the reaction when ammonia is the substrate. The allosteric effector GTP functions by stabilizing the protein conformation that binds the tetrahedral intermediate(s) formed during glutamine hydrolysis. Inhibited by the product CTP, via allosteric rather than competitive inhibition. Catalyzes the ATP-dependent amination of UTP to CTP with either L-glutamine or ammonia as the source of nitrogen. Regulates intracellular CTP levels through interactions with the four ribonucleotide triphosphates. This chain is CTP synthase, found in Bacillus subtilis (strain 168).